The following is a 234-amino-acid chain: Phosphatidylinositol phosphate synthase (234 aa).

2 consecutive transmembrane segments (helical) span residues L28 to L48 and L54 to L70. D31–T34 serves as a coordination point for a CDP-1,2-diacyl-sn-glycerol. 2 residues coordinate Mg(2+): D68 and D71. A CDP-1,2-diacyl-sn-glycerol is bound by residues G72, R76, and T82. Positions 89 and 93 each coordinate Mg(2+). 4 helical membrane passes run A91–F110, L116–I134, R155–W173, and V179–Y197. Residue D93 is the Proton acceptor of the active site. Positions P211–R234 are disordered. Positions V215–D228 are enriched in basic and acidic residues.

It belongs to the CDP-alcohol phosphatidyltransferase class-I family. In terms of assembly, homodimer. Mg(2+) is required as a cofactor.

The protein localises to the cell membrane. The enzyme catalyses a CDP-1,2-diacyl-sn-glycerol + 1D-myo-inositol 3-phosphate = a 1,2-diacyl-sn-glycero-3-phospho-(1D-myo-inositol-3-phosphate) + CMP + H(+). It catalyses the reaction 1,2-di-(9Z-octadecenoyl)-sn-glycero-3-cytidine-5'-diphosphate + 1D-myo-inositol 3-phosphate = 1,2-di-(9Z-octadecenoyl)-sn-glycero-3-phospho-(1D-myo-inositol-3-phosphate) + CMP + H(+). The protein operates within phospholipid metabolism; phosphatidylinositol phosphate biosynthesis. Functionally, catalyzes the conjugation of the 1'-hydroxyl group of D-myo-inositol-3-phosphate (also named L-myo-inositol-1-phosphate) with a lipid tail of cytidine diphosphate diacylglycerol (CDP-DAG), forming phosphatidylinositol phosphate (PIP) and CMP. PIP is a precursor of phosphatidylinositol (PI) which is an essential lipid for mycobacteria required for formation of their cell wall. In Mycobacterium marinum (strain ATCC BAA-535 / M), this protein is Phosphatidylinositol phosphate synthase.